The primary structure comprises 38 residues: Small toxic protein BsrG (38 aa).

Residues 11 to 31 (INFGGLILNTVLLIFNIMMIV) traverse the membrane as a helical segment.

It localises to the cell membrane. Its function is as follows. Toxic component of a type I toxin-antitoxin (TA) system; expression in the absence of cognate antisense antitoxin SR4 RNA leads to cell lysis. Induced expression causes membrane invaginations that dislocate the cell wall synthesis machinery, leading to eventual death. Unlike many type I TA systems it does not form pores. Base pairing occurs between the 3' UTRs of bsrG mRNA and SR4 RNA, which leads to initiation of degradation by RNase III (rnc) followed by the action of RNase Y (rny) and RNase R (rnr). Not toxic when expressed in E.coli. When induced during logarithmic growth it only slowly exerts its toxic effect. Expression during log growth leads to significant disturbances of cell envelope biosynthesis and cell morphology, causing cell membrane invaginations and delocalization of cell division and cell wall synthesis machinery. Cell lysis depends on mreB, lytC and lytD, suggesting expression of bsrG triggers autolysis rather than disintegration of the membrane. Additionally expression of bsrG also inhibits transcription. This is Small toxic protein BsrG from Bacillus subtilis (strain 168).